The chain runs to 268 residues: uncharacterized protein (268 aa).

A signal peptide spans 1-18; the sequence is MRGFLLLSLGVFSFSALA. 2 domain regions span residues 24–184 and 185–268; these read SHDL…ELLP and SPAT…NWLR. Cys-110 and Cys-115 are joined by a disulfide.

In terms of assembly, monomer.

It localises to the periplasm. This is an uncharacterized protein from Pseudomonas aeruginosa (strain ATCC 15692 / DSM 22644 / CIP 104116 / JCM 14847 / LMG 12228 / 1C / PRS 101 / PAO1).